We begin with the raw amino-acid sequence, 506 residues long: Maturase K (506 aa).

Belongs to the intron maturase 2 family. MatK subfamily.

The protein localises to the plastid. It localises to the chloroplast. Functionally, usually encoded in the trnK tRNA gene intron. Probably assists in splicing its own and other chloroplast group II introns. This is Maturase K from Calluna vulgaris (Heather).